A 596-amino-acid chain; its full sequence is Linalool synthase TPS3, chloroplastic (596 aa).

The N-terminal 39 residues, 1 to 39, are a transit peptide targeting the chloroplast; that stretch reads MISSLNPLFTTHRSGVIAQQFFASSAAASINSVSSLKIA. (2E)-geranyl diphosphate contacts are provided by arginine 308, aspartate 345, aspartate 349, arginine 486, and asparagine 489. Positions 345 and 349 each coordinate Mg(2+). Residues 345-349 carry the DDXXD motif motif; that stretch reads DDIYD. Positions 489, 493, and 497 each coordinate Mg(2+).

This sequence belongs to the terpene synthase family. Tpsb subfamily. In terms of assembly, monomer. Mg(2+) serves as cofactor. The cofactor is Mn(2+). As to expression, expressed in flowers and fruits.

The protein resides in the plastid. Its subcellular location is the chloroplast. The catalysed reaction is (2E)-geranyl diphosphate = beta-myrcene + diphosphate. It carries out the reaction (2E)-geranyl diphosphate + H2O = linalool + diphosphate. It catalyses the reaction (2E)-geranyl diphosphate = (Z)-beta-ocimene + diphosphate. The enzyme catalyses (2E)-geranyl diphosphate = (E)-beta-ocimene + diphosphate. It functions in the pathway secondary metabolite biosynthesis; terpenoid biosynthesis. Monoterpene synthase (mono-TPS) involved in the biosynthesis of monoterpenes natural products, constituent of coffee beverage aroma. Catalyzes the conversion of (2E)-geranyl diphosphate (GPP) into linalool and beta-myrcene, and, as minor products, cis-ocimene and trans-ocimene. Not able to use geranylgeranyl pyrophosphate (GGPP) and farnesyl pyrophosphate (FPP) as substrates. The chain is Linalool synthase TPS3, chloroplastic from Coffea arabica (Arabian coffee).